An 87-amino-acid polypeptide reads, in one-letter code: Large ribosomal subunit protein bL31B (87 aa).

The protein belongs to the bacterial ribosomal protein bL31 family. Type B subfamily. Part of the 50S ribosomal subunit.

In Burkholderia ambifaria (strain MC40-6), this protein is Large ribosomal subunit protein bL31B.